Reading from the N-terminus, the 757-residue chain is Polymeric immunoglobulin receptor (757 aa).

The N-terminal stretch at 1–18 (MSRLFLACLLAIFPVVSM) is a signal peptide. The Ig-like V-type 1; required for binding to polymeric IgA and IgM domain occupies 19–126 (KSPIFGPEEV…RGLNFDVSLE (108 aa)). Over 19–632 (KSPIFGPEEV…TGYSGSSKAL (614 aa)) the chain is Extracellular. 7 disulfides stabilise this stretch: Cys40–Cys110, Cys56–Cys64, Cys152–Cys220, Cys257–Cys324, Cys271–Cys279, Cys370–Cys440, and Cys384–Cys394. An N-linked (GlcNAc...) asparagine glycan is attached at Asn83. Ig-like V-type domains lie at 145 to 237 (GRTV…DLQV), 250 to 341 (RSSV…VQAW), 353 to 457 (ASPS…LKVV), and 461 to 560 (PSLK…VYVA). N-linked (GlcNAc...) asparagine glycans are attached at residues Asn420 and Asn468. 3 disulfides stabilise this stretch: Cys481-Cys543, Cys485-Cys519, and Cys495-Cys502. The segment at 607-627 (KDAAGGPGAPADPGRPTGYSG) is disordered. The helical transmembrane segment at 633 to 653 (VSTLVPLALVLVAGVVAIGVV) threads the bilayer. The Cytoplasmic portion of the chain corresponds to 654-757 (RARHRKNVDR…AATQNGPTEA (104 aa)). Residues Ser665, Ser674, Ser681, and Ser727 each carry the phosphoserine modification. Residues 679–688 (ENSRDFEGRD) show a composition bias toward basic and acidic residues. The interval 679–730 (ENSRDFEGRDNMGASPEAQETSLGGKDEFATTTEDTVESKEPKKAKRSSKEE) is disordered.

In terms of assembly, interacts (mainly via CDR1-like domain) with dimeric IgA. Interacts (mainly via CDR2-like domain) with pentameric IgM. Either free or part of the secretory IgA (sIgA) complex that consists of two, four or five IgA monomers, and two additional non-Ig polypeptides, namely the JCHAIN and the secretory component (the proteolytic product of PIGR). Free secretory component interacts with bacterial antigens toxA of C.difficile and eae of E.coli. Post-translationally, in the absence of dimeric IgA, Ser-727 is phosphorylated which allows PIGR to function normally. In terms of processing, N-glycosylated. N-glycosylation is required for anchoring IgA molecules to mucus, but is not necessary for Ig binding. In terms of tissue distribution, found in mammary gland, jejunum, lung, kidney and small intestine.

Its subcellular location is the cell membrane. The protein resides in the secreted. Mediates selective transcytosis of polymeric IgA and IgM across mucosal epithelial cells. Binds polymeric IgA and IgM at the basolateral surface of epithelial cells. The complex is then transported across the cell to be secreted at the apical surface. During this process, a cleavage occurs that separates the extracellular (known as the secretory component) from the transmembrane segment. Functionally, through its N-linked glycans ensures anchoring of secretory IgA (sIgA) molecules to mucus lining the epithelial surface to neutralize extracellular pathogens. On its own (free form) may act as a non-specific microbial scavenger to prevent pathogen interaction with epithelial cells. The chain is Polymeric immunoglobulin receptor (PIGR) from Bos taurus (Bovine).